The primary structure comprises 373 residues: D-alanine--D-alanine ligase (373 aa).

The ATP-grasp domain maps to Lys156–Glu363. Cys184–Glu239 contacts ATP. Residues Asp318, Glu330, and Asn332 each contribute to the Mg(2+) site.

The protein belongs to the D-alanine--D-alanine ligase family. It depends on Mg(2+) as a cofactor. The cofactor is Mn(2+).

The protein localises to the cytoplasm. The catalysed reaction is 2 D-alanine + ATP = D-alanyl-D-alanine + ADP + phosphate + H(+). The protein operates within cell wall biogenesis; peptidoglycan biosynthesis. In terms of biological role, cell wall formation. This chain is D-alanine--D-alanine ligase, found in Mycobacterium tuberculosis (strain ATCC 25177 / H37Ra).